Consider the following 209-residue polypeptide: Kynurenine formamidase (209 aa).

W20 lines the substrate pocket. Zn(2+) contacts are provided by H50, H54, and D56. H60 (proton donor/acceptor) is an active-site residue. Residues H161 and E173 each coordinate Zn(2+).

The protein belongs to the Cyclase 1 superfamily. KynB family. Homodimer. Zn(2+) is required as a cofactor.

It catalyses the reaction N-formyl-L-kynurenine + H2O = L-kynurenine + formate + H(+). Its pathway is amino-acid degradation; L-tryptophan degradation via kynurenine pathway; L-kynurenine from L-tryptophan: step 2/2. Functionally, catalyzes the hydrolysis of N-formyl-L-kynurenine to L-kynurenine, the second step in the kynurenine pathway of tryptophan degradation. This Bacillus cereus (strain ATCC 14579 / DSM 31 / CCUG 7414 / JCM 2152 / NBRC 15305 / NCIMB 9373 / NCTC 2599 / NRRL B-3711) protein is Kynurenine formamidase.